The primary structure comprises 178 residues: Large ribosomal subunit protein uL6 (178 aa).

This sequence belongs to the universal ribosomal protein uL6 family. Part of the 50S ribosomal subunit.

In terms of biological role, this protein binds to the 23S rRNA, and is important in its secondary structure. It is located near the subunit interface in the base of the L7/L12 stalk, and near the tRNA binding site of the peptidyltransferase center. This chain is Large ribosomal subunit protein uL6, found in Halalkalibacterium halodurans (strain ATCC BAA-125 / DSM 18197 / FERM 7344 / JCM 9153 / C-125) (Bacillus halodurans).